A 238-amino-acid chain; its full sequence is Peptidyl-tRNA hydrolase (238 aa).

Tyr-14 is a binding site for tRNA. His-19 serves as the catalytic Proton acceptor. TRNA is bound by residues Tyr-64, Asn-66, and Asn-112. Residues 202 to 225 (PAAQSHIHQARNSAQPKKLPETGP) are disordered. The span at 207-216 (HIHQARNSAQ) shows a compositional bias: polar residues.

The protein belongs to the PTH family. In terms of assembly, monomer.

Its subcellular location is the cytoplasm. It carries out the reaction an N-acyl-L-alpha-aminoacyl-tRNA + H2O = an N-acyl-L-amino acid + a tRNA + H(+). Its function is as follows. Hydrolyzes ribosome-free peptidyl-tRNAs (with 1 or more amino acids incorporated), which drop off the ribosome during protein synthesis, or as a result of ribosome stalling. In terms of biological role, catalyzes the release of premature peptidyl moieties from peptidyl-tRNA molecules trapped in stalled 50S ribosomal subunits, and thus maintains levels of free tRNAs and 50S ribosomes. The protein is Peptidyl-tRNA hydrolase of Agrobacterium fabrum (strain C58 / ATCC 33970) (Agrobacterium tumefaciens (strain C58)).